The following is a 35-amino-acid chain: Mu-thomitoxin-Hme1c (35 aa).

Intrachain disulfides connect C2–C18, C9–C23, and C17–C34.

The protein belongs to the neurotoxin 07 (Beta/delta-agtx) family. As to expression, expressed by the venom gland.

Its subcellular location is the secreted. Its function is as follows. Gating-modifier toxin that inhibits mammalian and insect voltage-gated sodium channels. It shifts the voltage dependence of channel activation to more positive voltages. It shows potent activity on Nav1.4/SCN4A (IC(50)=103 nM), Nav1.5/SCN5A (IC(50)=268 nM) and Para/DmNav1 (IC(50)=555 nM) and lower activities on Nav1.2/SCN2A (IC(50)=1447 nM) and Nav1.6/SCN8A (IC(50)=3504 nM). In addition, at a concentration of 1 uM, the toxin inhibits 90-100% of sodium current through Nav1.2/SCN2A, Nav1.4/SCN4A, Nav1.5/SCN5A, Nav1.6/SCN8A and Para/DmNav1 channels, when the voltage of maximal activation of the channel in control conditions is applied. It binds to the S3-S4 helix-loop-helix motif in the voltage-sensing domain of repeat 1 (shown on hNav1.4/SCN4A). The toxin is amphiphilic and binds to both neutral and negatively charged lipid vesicles with high affinity. The hydrophobic face lies on the opposite side to the hydrophobic faces of classical gating modifiers. The chain is Mu-thomitoxin-Hme1c from Heriaeus mellotteei (Crab spider).